Reading from the N-terminus, the 325-residue chain is Putative gluconeogenesis factor (325 aa).

Belongs to the gluconeogenesis factor family.

It localises to the cytoplasm. Required for morphogenesis under gluconeogenic growth conditions. The chain is Putative gluconeogenesis factor from Streptococcus pneumoniae serotype 4 (strain ATCC BAA-334 / TIGR4).